The primary structure comprises 250 residues: Triosephosphate isomerase (250 aa).

9–11 (NWK) serves as a coordination point for substrate. The active-site Electrophile is the H94. The active-site Proton acceptor is the E166. Substrate-binding positions include G172, S212, and 233-234 (GG).

The protein belongs to the triosephosphate isomerase family. In terms of assembly, homodimer.

Its subcellular location is the cytoplasm. The enzyme catalyses D-glyceraldehyde 3-phosphate = dihydroxyacetone phosphate. It participates in carbohydrate biosynthesis; gluconeogenesis. The protein operates within carbohydrate degradation; glycolysis; D-glyceraldehyde 3-phosphate from glycerone phosphate: step 1/1. Functionally, involved in the gluconeogenesis. Catalyzes stereospecifically the conversion of dihydroxyacetone phosphate (DHAP) to D-glyceraldehyde-3-phosphate (G3P). The polypeptide is Triosephosphate isomerase (Thermus thermophilus (strain ATCC 27634 / DSM 579 / HB8)).